The chain runs to 147 residues: Putative 2'-deoxynucleoside 5'-phosphate N-hydrolase 1 (147 aa).

Substrate is bound by residues 10–16 (YFCGSIR), Tyr-25, His-42, Glu-90, and 114–116 (SAM).

It belongs to the 2'-deoxynucleoside 5'-phosphate N-hydrolase 1 family. In terms of assembly, monomer and homodimer.

The protein resides in the cytoplasm. The protein localises to the nucleus. The catalysed reaction is a pyrimidine 2'-deoxyribonucleoside 5'-phosphate + H2O = a pyrimidine nucleobase + 2-deoxy-D-ribose 5-phosphate. The enzyme catalyses a purine 2'-deoxyribonucleoside 5'-phosphate + H2O = a purine nucleobase + 2-deoxy-D-ribose 5-phosphate. Catalyzes the cleavage of the N-glycosidic bond of deoxyribonucleoside 5'-monophosphates to yield deoxyribose 5-phosphate and a purine or pyrimidine base. The polypeptide is Putative 2'-deoxynucleoside 5'-phosphate N-hydrolase 1 (Nematostella vectensis (Starlet sea anemone)).